We begin with the raw amino-acid sequence, 361 residues long: Probable pectinesterase 49 (361 aa).

Positions 1–22 (MGYISLALVALLVFFASPVVLA) are cleaved as a signal peptide. N-linked (GlcNAc...) asparagine glycosylation occurs at N128. Q174 serves as a coordination point for substrate. D197 acts as the Proton donor in catalysis. Residue D218 is the Nucleophile of the active site. Positions 275 and 277 each coordinate substrate.

The protein belongs to the pectinesterase family. In terms of tissue distribution, expressed in flower buds.

It localises to the secreted. It is found in the cell wall. The enzyme catalyses [(1-&gt;4)-alpha-D-galacturonosyl methyl ester](n) + n H2O = [(1-&gt;4)-alpha-D-galacturonosyl](n) + n methanol + n H(+). It functions in the pathway glycan metabolism; pectin degradation; 2-dehydro-3-deoxy-D-gluconate from pectin: step 1/5. Functionally, acts in the modification of cell walls via demethylesterification of cell wall pectin. The sequence is that of Probable pectinesterase 49 (PME49) from Arabidopsis thaliana (Mouse-ear cress).